The following is a 450-amino-acid chain: Perilipin-2 (450 aa).

A2 bears the N-acetylalanine mark. S215 carries the post-translational modification Phosphoserine. Y232 is modified (phosphotyrosine). The interval 411–450 (ESESAQAPGTTRRPGRWSRKHPKPVPVSNAEGSQPDDSSS) is disordered. Positions 423 to 433 (RPGRWSRKHPK) are enriched in basic residues. The span at 440–450 (AEGSQPDDSSS) shows a compositional bias: polar residues.

Belongs to the perilipin family. In terms of assembly, interacts with IRGC. In terms of processing, acylated; primarily with C14, C16 and C18 fatty acids. Phosphorylation at Tyr-232 by isoform 1 of CHKA (CHKalpha2) promotes dissociation from lipid droplets: dissociation is followed by recruitment of autophagosome machinery to lipid droplets and subsequent lipid droplet lipolysis. Post-translationally, polyubiquitination of Nt-acetylatable A-PLIN2 by MARCHF6 lead to degradation by 26S proteasomes. As to expression, milk lipid globules.

The protein resides in the membrane. The protein localises to the lipid droplet. Structural component of lipid droplets, which is required for the formation and maintenance of lipid storage droplets. The protein is Perilipin-2 (PLIN2) of Bos taurus (Bovine).